The sequence spans 159 residues: Cyclic pyranopterin monophosphate synthase (159 aa).

Substrate-binding positions include 76–78 (MCH) and 114–115 (ME). Asp129 is a catalytic residue.

This sequence belongs to the MoaC family. Homohexamer; trimer of dimers.

It carries out the reaction (8S)-3',8-cyclo-7,8-dihydroguanosine 5'-triphosphate = cyclic pyranopterin phosphate + diphosphate. Its pathway is cofactor biosynthesis; molybdopterin biosynthesis. Functionally, catalyzes the conversion of (8S)-3',8-cyclo-7,8-dihydroguanosine 5'-triphosphate to cyclic pyranopterin monophosphate (cPMP). This chain is Cyclic pyranopterin monophosphate synthase, found in Natranaerobius thermophilus (strain ATCC BAA-1301 / DSM 18059 / JW/NM-WN-LF).